The following is a 124-amino-acid chain: Small ribosomal subunit protein bS16 (124 aa).

A disordered region spans residues 80-124 (AGLAKRPARNNPTKAQPGKKAQERAAEAKQKAEEAAAAASEAAAE). The segment covering 99 to 113 (KAQERAAEAKQKAEE) has biased composition (basic and acidic residues). Positions 114-124 (AAAAASEAAAE) are enriched in low complexity.

The protein belongs to the bacterial ribosomal protein bS16 family.

This Rhizobium meliloti (strain 1021) (Ensifer meliloti) protein is Small ribosomal subunit protein bS16.